We begin with the raw amino-acid sequence, 465 residues long: Phenylalanine--tRNA ligase alpha subunit (465 aa).

L-phenylalanine-binding positions include T309, 348–350 (QLD), and F388. E390 contacts Mg(2+).

It belongs to the class-II aminoacyl-tRNA synthetase family. Phe-tRNA synthetase alpha subunit type 2 subfamily. As to quaternary structure, tetramer of two alpha and two beta subunits. Mg(2+) serves as cofactor.

It localises to the cytoplasm. The catalysed reaction is tRNA(Phe) + L-phenylalanine + ATP = L-phenylalanyl-tRNA(Phe) + AMP + diphosphate + H(+). This chain is Phenylalanine--tRNA ligase alpha subunit, found in Sulfolobus acidocaldarius (strain ATCC 33909 / DSM 639 / JCM 8929 / NBRC 15157 / NCIMB 11770).